A 438-amino-acid polypeptide reads, in one-letter code: Exosome complex component RRP45B (438 aa).

2 disordered regions span residues Pro-293–Glu-322 and Ser-334–Ser-438. Composition is skewed to basic and acidic residues over residues Val-307–Glu-322 and Ser-334–Ala-347. Polar residues predominate over residues Thr-380–Ala-394. Over residues Leu-410–Lys-429 the composition is skewed to basic and acidic residues.

This sequence belongs to the RNase PH family.

It localises to the cytoplasm. The protein resides in the nucleus. Probable 3'-&gt;5' exoribonuclease involved in the regulation of cuticular wax biosynthesis by controlling the expression of CER3. May act by degrading a specific mRNA species encoding a negative regulator of CER3 transcription. Can perform exosomal functions and complement the yeast rrp45 null mutant. The sequence is that of Exosome complex component RRP45B from Arabidopsis thaliana (Mouse-ear cress).